Here is a 294-residue protein sequence, read N- to C-terminus: tRNA pseudouridine synthase B (294 aa).

Residue Asp-40 is the Nucleophile of the active site.

It belongs to the pseudouridine synthase TruB family. Type 1 subfamily.

It carries out the reaction uridine(55) in tRNA = pseudouridine(55) in tRNA. Its function is as follows. Responsible for synthesis of pseudouridine from uracil-55 in the psi GC loop of transfer RNAs. This chain is tRNA pseudouridine synthase B, found in Synechococcus elongatus (strain ATCC 33912 / PCC 7942 / FACHB-805) (Anacystis nidulans R2).